Reading from the N-terminus, the 166-residue chain is 3-isopropylmalate dehydratase small subunit 2 (166 aa).

Belongs to the LeuD family. LeuD type 2 subfamily. Heterodimer of LeuC and LeuD.

The catalysed reaction is (2R,3S)-3-isopropylmalate = (2S)-2-isopropylmalate. It participates in amino-acid biosynthesis; L-leucine biosynthesis; L-leucine from 3-methyl-2-oxobutanoate: step 2/4. Functionally, catalyzes the isomerization between 2-isopropylmalate and 3-isopropylmalate, via the formation of 2-isopropylmaleate. This Thermotoga maritima (strain ATCC 43589 / DSM 3109 / JCM 10099 / NBRC 100826 / MSB8) protein is 3-isopropylmalate dehydratase small subunit 2 (leuD2).